The primary structure comprises 405 residues: Nicotinate phosphoribosyltransferase (405 aa).

A Phosphohistidine; by autocatalysis modification is found at histidine 230.

It belongs to the NAPRTase family. In terms of processing, transiently phosphorylated on a His residue during the reaction cycle. Phosphorylation strongly increases the affinity for substrates and increases the rate of nicotinate D-ribonucleotide production. Dephosphorylation regenerates the low-affinity form of the enzyme, leading to product release.

It carries out the reaction nicotinate + 5-phospho-alpha-D-ribose 1-diphosphate + ATP + H2O = nicotinate beta-D-ribonucleotide + ADP + phosphate + diphosphate. It functions in the pathway cofactor biosynthesis; NAD(+) biosynthesis; nicotinate D-ribonucleotide from nicotinate: step 1/1. In terms of biological role, catalyzes the synthesis of beta-nicotinate D-ribonucleotide from nicotinate and 5-phospho-D-ribose 1-phosphate at the expense of ATP. This chain is Nicotinate phosphoribosyltransferase, found in Bordetella bronchiseptica (strain ATCC BAA-588 / NCTC 13252 / RB50) (Alcaligenes bronchisepticus).